We begin with the raw amino-acid sequence, 514 residues long: 1-pyrroline-5-carboxylate dehydrogenase (514 aa).

Active-site residues include Glu-286 and Cys-320.

Belongs to the aldehyde dehydrogenase family. RocA subfamily.

It catalyses the reaction L-glutamate 5-semialdehyde + NAD(+) + H2O = L-glutamate + NADH + 2 H(+). It functions in the pathway amino-acid degradation; L-proline degradation into L-glutamate; L-glutamate from L-proline: step 2/2. In Staphylococcus saprophyticus subsp. saprophyticus (strain ATCC 15305 / DSM 20229 / NCIMB 8711 / NCTC 7292 / S-41), this protein is 1-pyrroline-5-carboxylate dehydrogenase.